The chain runs to 1245 residues: Structural polyprotein (1245 aa).

The interval 1 to 106 (MNRGFFNMLG…KTKPGKRQRM (106 aa)) is disordered. Positions 37–70 (GLASQIQQLTTAVSALVIGQATRPQNPRPRPPPR) are host transcription inhibition. Over residues 38 to 49 (LASQIQQLTTAV) the composition is skewed to polar residues. The Nuclear localization signal motif lies at 63 to 100 (PRPRPPPRQKKQAPKQPPKPKKPKPQEKKKKQPAKTKP). Basic residues predominate over residues 67–106 (PPPRQKKQAPKQPPKPKKPKPQEKKKKQPAKTKPGKRQRM). The binding to the viral RNA stretch occupies residues 86–115 (KPQEKKKKQPAKTKPGKRQRMALKLEADRL). The tract at residues 100-114 (PGKRQRMALKLEADR) is ribosome-binding. A Peptidase S3 domain is found at 114–264 (RLFDVKNEDG…KTTPEGTEEW (151 aa)). Residue histidine 141 is the Charge relay system of the active site. Positions 146–156 (IDHPVLSKLKF) match the Nuclear export signal motif. Residues 157–162 (TKSSAY) form an interaction with spike glycoprotein E2 region. Aspartate 163 serves as the catalytic Charge relay system. A dimerization of the capsid protein region spans residues 185 to 195 (PEGFYNWHHGA). The active-site Charge relay system is serine 215. The tract at residues 221 to 225 (DNSGR) is dimerization of the capsid protein. Positions 249 to 253 (SKGKT) are interaction with spike glycoprotein E2. Positions 265–279 (SAAPLVTAMCLLGNV) are functions as an uncleaved signal peptide for the precursor of protein E3/E2. An N-linked (GlcNAc...) asparagine; by host glycan is attached at asparagine 278. 4 disulfide bridges follow: cysteine 283–cysteine 289, cysteine 480–cysteine 594, cysteine 529–cysteine 554, and cysteine 531–cysteine 548. The Extracellular portion of the chain corresponds to 329–690 (SVTDDFTLTS…HEIVQHYYHR (362 aa)). The N-linked (GlcNAc...) asparagine; by host glycan is linked to asparagine 524. N-linked (GlcNAc...) asparagine; by host glycosylation occurs at asparagine 646. A helical membrane pass occupies residues 691-718 (HPVYTILAVASAAVAMMIGVTVAALCAC). The interaction with the capsid protein stretch occupies residues 719–723 (KARRE). Residues 719–751 (KARRECLTPYALAPNAVIPTSLALLCCVRSANA) lie on the Cytoplasmic side of the membrane. S-palmitoyl cysteine; by host attachment occurs at residues cysteine 724, cysteine 744, and cysteine 745. Residues cysteine 724 and cysteine 745 are joined by a disulfide bond. The Extracellular segment spans residues 752-763 (ETFTETMSYFWS). The helical transmembrane segment at 764–784 (NSQPFFWVQLCIPLAAVIVLM) threads the bilayer. Residue arginine 785 is a topological domain, cytoplasmic. Residues 786-806 (CCSCCLPFLVVAGAYLAKVDA) traverse the membrane as a helical segment. At 807–1214 (YEHATTVPNV…QAAISKTSWS (408 aa)) the chain is on the extracellular side. Cystine bridges form between cysteine 855–cysteine 920, cysteine 868–cysteine 900, cysteine 869–cysteine 902, and cysteine 874–cysteine 884. Residues 890 to 907 (VYPFMWGGAQCFCDSENS) form an E1 fusion peptide loop region. Asparagine 945 and asparagine 1051 each carry an N-linked (GlcNAc...) asparagine; by host glycan. Cystine bridges form between cysteine 1065/cysteine 1077, cysteine 1107/cysteine 1182, cysteine 1112/cysteine 1186, and cysteine 1134/cysteine 1176. The chain crosses the membrane as a helical span at residues 1215 to 1239 (WLFALFGGASSLLIIGLTIFACSMM). Topologically, residues 1240–1245 (LTSTRR) are cytoplasmic.

Homodimer. Homomultimer. Interacts with host karyopherin KPNA4; this interaction allows the nuclear import of the viral capsid protein. Interacts with spike glycoprotein E2. Interacts with host IRAK1; the interaction leads to inhibition of IRAK1-dependent signaling. As to quaternary structure, the precursor of protein E3/E2 and E1 form a heterodimer shortly after synthesis. In terms of assembly, the precursor of protein E3/E2 and E1 form a heterodimer shortly after synthesis. Processing of the precursor of protein E3/E2 into E2 and E3 results in a heterodimer of the spike glycoproteins E2 and E1. Spike at virion surface are constituted of a trimer of E2-E1 heterodimers. After target cell attachment and endocytosis, E1 change conformation to form homotrimers. E2-E1 heterodimers interact with host VLDLR or LRP8/APOER2 to mediate viral entry. Interacts with 6K protein. Processing of the precursor of protein E3/E2 into E2 and E3 results in a heterodimer of the spike glycoproteins E2 and E1. Spike at virion surface are constituted of a trimer of E2-E1 heterodimers. E2-E1 heterodimers interact with host VLDLR or LRP8/APOER2 to mediate viral entry. Interacts with 6K protein. Interacts with the capsid protein. As to quaternary structure, oligomer. Interacts with spike glycoprotein E1. Interacts with spike glycoprotein E2. Structural polyprotein: Specific enzymatic cleavages in vivo yield mature proteins. Capsid protein is auto-cleaved during polyprotein translation, unmasking a signal peptide at the N-terminus of the precursor of E3/E2. The remaining polyprotein is then targeted to the host endoplasmic reticulum, where host signal peptidase cleaves it into pE2, 6K and E1 proteins. pE2 is further processed to mature E3 and E2 by host furin in trans-Golgi vesicle. In terms of processing, palmitoylated via thioester bonds. These palmitoylations may induce disruption of the C-terminus transmembrane. This would result in the reorientation of E2 C-terminus from lumenal to cytoplasmic side. Post-translationally, N-glycosylated. Palmitoylated via thioester bonds.

It localises to the virion. It is found in the host cytoplasm. The protein resides in the host cell membrane. The protein localises to the host nucleus. Its subcellular location is the virion membrane. It localises to the host Golgi apparatus. It is found in the host trans-Golgi network. The protein resides in the host endoplasmic reticulum. It catalyses the reaction Autocatalytic release of the core protein from the N-terminus of the togavirus structural polyprotein by hydrolysis of a -Trp-|-Ser- bond.. Its function is as follows. Forms an icosahedral capsid with a T=4 symmetry composed of 240 copies of the capsid protein surrounded by a lipid membrane through which penetrate 80 spikes composed of trimers of E1-E2 heterodimers. The capsid protein binds to the viral RNA genome at a site adjacent to a ribosome binding site for viral genome translation following genome release. Possesses a protease activity that results in its autocatalytic cleavage from the nascent structural protein. Following its self-cleavage, the capsid protein transiently associates with ribosomes, and within several minutes the protein binds to viral RNA and rapidly assembles into icosahedric core particles. The resulting nucleocapsid eventually associates with the cytoplasmic domain of the spike glycoprotein E2 at the cell membrane, leading to budding and formation of mature virions. In case of infection, new virions attach to target cells and after clathrin-mediated endocytosis their membrane fuses with the host endosomal membrane. This leads to the release of the nucleocapsid into the cytoplasm, followed by an uncoating event necessary for the genomic RNA to become accessible. The uncoating might be triggered by the interaction of capsid proteins with ribosomes. Binding of ribosomes would release the genomic RNA since the same region is genomic RNA-binding and ribosome-binding. Specifically inhibits interleukin-1 receptor-associated kinase 1/IRAK1-dependent signaling during viral entry, representing a means by which the alphaviruses may evade innate immune detection and activation prior to viral gene expression. In terms of biological role, provides the signal sequence for the translocation of the precursor of protein E3/E2 to the host endoplasmic reticulum. Furin-cleaved E3 remains associated with spike glycoprotein E1 and mediates pH protection of the latter during the transport via the secretory pathway. After virion release from the host cell, the assembly protein E3 is gradually released in the extracellular space. Plays a role in viral attachment to target host cell, by binding to the cell receptors VLDLR or LRP8/APOER2. Synthesized as a pE2 precursor which is processed by furin at the cell membrane just before virion budding, giving rise to E2-E1 heterodimer. The pE2-E1 heterodimer is stable, whereas E2-E1 is unstable and dissociate at low pH. pE2 is processed at the last step, presumably to avoid E1 fusion activation before its final export to cell surface. E2 C-terminus contains a transitory transmembrane that would be disrupted by palmitoylation, resulting in reorientation of the C-terminal tail from lumenal to cytoplasmic side. This step is critical since E2 C-terminus is involved in budding by interacting with capsid proteins. This release of E2 C-terminus in cytoplasm occurs lately in protein export, and precludes premature assembly of particles at the endoplasmic reticulum membrane. Functionally, acts as a viroporin that participates in virus glycoprotein processing and transport to the plasma membrane, cell permeabilization and budding of viral particles. Disrupts the calcium homeostasis of the cell, probably at the endoplasmic reticulum level resulting in the increased levels of cytoplasmic calcium. Because of its lipophilic properties, the 6K protein is postulated to influence the selection of lipids that interact with the transmembrane domains of the glycoproteins, which, in turn, affects the deformability of the bilayer required for the extreme curvature that occurs as budding proceeds. Present in low amount in virions, about 3% compared to viral glycoproteins. Its function is as follows. Class II viral fusion protein. Fusion activity is inactive as long as E1 is bound to E2 in mature virion. After virus attachment to target cell via host VLDLR or LRP8/APOER2 and endocytosis, acidification of the endosome induces dissociation of E1/E2 heterodimer and concomitant trimerization of the E1 subunits. This E1 trimer is fusion active, and promotes release of viral nucleocapsid in cytoplasm after endosome and viral membrane fusion. Efficient fusion requires the presence of cholesterol and sphingolipid in the target membrane. The sequence is that of Structural polyprotein from Acrocephalus scirpaceus (Eurasian reed-warbler).